A 176-amino-acid chain; its full sequence is ATP-dependent protease subunit HslV (176 aa).

Threonine 2 is a catalytic residue. Na(+)-binding residues include serine 157, cysteine 160, and threonine 163.

It belongs to the peptidase T1B family. HslV subfamily. As to quaternary structure, a double ring-shaped homohexamer of HslV is capped on each side by a ring-shaped HslU homohexamer. The assembly of the HslU/HslV complex is dependent on binding of ATP.

The protein resides in the cytoplasm. The enzyme catalyses ATP-dependent cleavage of peptide bonds with broad specificity.. Allosterically activated by HslU binding. Functionally, protease subunit of a proteasome-like degradation complex believed to be a general protein degrading machinery. The polypeptide is ATP-dependent protease subunit HslV (Buchnera aphidicola subsp. Baizongia pistaciae (strain Bp)).